The primary structure comprises 225 residues: Ribonuclease 3 (225 aa).

Residues 5 to 127 (IDKLERKLGY…IIGAIYLDSD (123 aa)) form the RNase III domain. Residue glutamate 40 coordinates Mg(2+). Residue aspartate 44 is part of the active site. 2 residues coordinate Mg(2+): aspartate 113 and glutamate 116. Glutamate 116 is an active-site residue. Positions 154–224 (DPKTRLQEFL…AETALEQLTN (71 aa)) constitute a DRBM domain. Residues 204–225 (GTSRRKAEQAAAETALEQLTNG) form a disordered region. The segment covering 212–225 (QAAAETALEQLTNG) has biased composition (low complexity).

The protein belongs to the ribonuclease III family. Homodimer. Mg(2+) is required as a cofactor.

It localises to the cytoplasm. The enzyme catalyses Endonucleolytic cleavage to 5'-phosphomonoester.. Functionally, digests double-stranded RNA. Involved in the processing of primary rRNA transcript to yield the immediate precursors to the large and small rRNAs (23S and 16S). Processes some mRNAs, and tRNAs when they are encoded in the rRNA operon. Processes pre-crRNA and tracrRNA of type II CRISPR loci if present in the organism. The polypeptide is Ribonuclease 3 (Vibrio parahaemolyticus serotype O3:K6 (strain RIMD 2210633)).